The chain runs to 156 residues: Ribosome maturation factor RimP (156 aa).

This sequence belongs to the RimP family.

It is found in the cytoplasm. Required for maturation of 30S ribosomal subunits. The sequence is that of Ribosome maturation factor RimP from Anoxybacillus flavithermus (strain DSM 21510 / WK1).